The chain runs to 238 residues: ATP synthase subunit a (238 aa).

Transmembrane regions (helical) follow at residues 18–38 (MSTV…TFIG), 76–96 (FIVL…LGLP), 117–137 (VLTL…GIKI), 195–215 (LIGM…GLFI), and 216–236 (GAIQ…HKVE).

It belongs to the ATPase A chain family. F-type ATPases have 2 components, CF(1) - the catalytic core - and CF(0) - the membrane proton channel. CF(1) has five subunits: alpha(3), beta(3), gamma(1), delta(1), epsilon(1). CF(0) has three main subunits: a(1), b(2) and c(9-12). The alpha and beta chains form an alternating ring which encloses part of the gamma chain. CF(1) is attached to CF(0) by a central stalk formed by the gamma and epsilon chains, while a peripheral stalk is formed by the delta and b chains.

It localises to the cell membrane. In terms of biological role, key component of the proton channel; it plays a direct role in the translocation of protons across the membrane. The polypeptide is ATP synthase subunit a (Alkalihalophilus pseudofirmus (strain ATCC BAA-2126 / JCM 17055 / OF4) (Bacillus pseudofirmus)).